The chain runs to 118 residues: NADH-quinone oxidoreductase subunit A 1 (118 aa).

3 helical membrane-spanning segments follow: residues 1–21 (MLGVYLPIIVLVAVAVIFGLA), 60–80 (FYIIAMLFILFDIEAVFMYPW), and 87–107 (LGIFGVVEMGLFIVILFVGYI).

The protein belongs to the complex I subunit 3 family. As to quaternary structure, NDH-1 is composed of 14 different subunits. Subunits NuoA, H, J, K, L, M, N constitute the membrane sector of the complex.

Its subcellular location is the cell inner membrane. It carries out the reaction a quinone + NADH + 5 H(+)(in) = a quinol + NAD(+) + 4 H(+)(out). NDH-1 shuttles electrons from NADH, via FMN and iron-sulfur (Fe-S) centers, to quinones in the respiratory chain. The immediate electron acceptor for the enzyme in this species is believed to be ubiquinone. Couples the redox reaction to proton translocation (for every two electrons transferred, four hydrogen ions are translocated across the cytoplasmic membrane), and thus conserves the redox energy in a proton gradient. This is NADH-quinone oxidoreductase subunit A 1 from Geobacter sulfurreducens (strain ATCC 51573 / DSM 12127 / PCA).